The sequence spans 962 residues: Glycine dehydrogenase (decarboxylating) (962 aa).

Lys709 bears the N6-(pyridoxal phosphate)lysine mark.

Belongs to the GcvP family. As to quaternary structure, the glycine cleavage system is composed of four proteins: P, T, L and H. Pyridoxal 5'-phosphate is required as a cofactor.

The catalysed reaction is N(6)-[(R)-lipoyl]-L-lysyl-[glycine-cleavage complex H protein] + glycine + H(+) = N(6)-[(R)-S(8)-aminomethyldihydrolipoyl]-L-lysyl-[glycine-cleavage complex H protein] + CO2. Its function is as follows. The glycine cleavage system catalyzes the degradation of glycine. The P protein binds the alpha-amino group of glycine through its pyridoxal phosphate cofactor; CO(2) is released and the remaining methylamine moiety is then transferred to the lipoamide cofactor of the H protein. This Shewanella sediminis (strain HAW-EB3) protein is Glycine dehydrogenase (decarboxylating).